Consider the following 389-residue polypeptide: Galactose-1-phosphate uridylyltransferase (389 aa).

Belongs to the galactose-1-phosphate uridylyltransferase type 2 family.

It localises to the cytoplasm. The enzyme catalyses alpha-D-galactose 1-phosphate + UDP-alpha-D-glucose = alpha-D-glucose 1-phosphate + UDP-alpha-D-galactose. It participates in carbohydrate metabolism; galactose metabolism. The sequence is that of Galactose-1-phosphate uridylyltransferase (galT) from Butyrivibrio fibrisolvens.